We begin with the raw amino-acid sequence, 244 residues long: Pyridoxal phosphate homeostasis protein (244 aa).

An N6-(pyridoxal phosphate)lysine modification is found at Lys37.

This sequence belongs to the pyridoxal phosphate-binding protein YggS/PROSC family.

Functionally, pyridoxal 5'-phosphate (PLP)-binding protein, which may be involved in intracellular homeostatic regulation of pyridoxal 5'-phosphate (PLP), the active form of vitamin B6. The protein is Pyridoxal phosphate homeostasis protein of Caenorhabditis elegans.